A 627-amino-acid polypeptide reads, in one-letter code: Zinc finger MYM-type protein 5 (627 aa).

Positions Met-1–Arg-23 are disordered. The segment covering Gly-12–Arg-23 has biased composition (polar residues). Lys-59 participates in a covalent cross-link: Glycyl lysine isopeptide (Lys-Gly) (interchain with G-Cter in SUMO2). Residues Asp-91 to Asn-123 are disordered. Residues Lys-137 and Lys-195 each participate in a glycyl lysine isopeptide (Lys-Gly) (interchain with G-Cter in SUMO2) cross-link. The MYM-type 1 zinc finger occupies His-234–Thr-268. An MYM-type 2; degenerate zinc finger spans residues Gln-280 to Ile-319. 2 MYM-type zinc fingers span residues His-326–Tyr-354 and Lys-370–Asn-396. The segment at Glu-405 to Glu-429 is disordered. Glycyl lysine isopeptide (Lys-Gly) (interchain with G-Cter in SUMO2) cross-links involve residues Lys-408, Lys-427, and Lys-517.

As to quaternary structure, interacts (via N-terminal 120 amino acid region) with ETV5 (via C-terminal).

Its subcellular location is the nucleus. Functionally, functions as a transcriptional regulator. In Mus musculus (Mouse), this protein is Zinc finger MYM-type protein 5 (Zmym5).